The following is a 777-amino-acid chain: Isoamylase (777 aa).

Residues 1 to 32 form the signal peptide; that stretch reads MDPHAPQRQRSGQRLRALALAALACALSPAHA. Positions 162, 263, 264, 266, and 293 each coordinate Ca(2+). D410 functions as the Nucleophile in the catalytic mechanism. C419 and C423 are joined by a disulfide. E458 functions as the Proton donor in the catalytic mechanism.

Belongs to the glycosyl hydrolase 13 family. Monomer. Requires Ca(2+) as cofactor.

The catalysed reaction is Hydrolysis of (1-&gt;6)-alpha-D-glucosidic branch linkages in glycogen, amylopectin and their beta-limit dextrins.. Has a high rate of hydrolysis for glycogen. Does not cleave pullulan. This is Isoamylase (iam) from Flavobacterium sp.